The chain runs to 103 residues: Small ribosomal subunit protein uS14c (103 aa).

The tract at residues 34–56 is disordered; that stretch reads KVSPLSLSEKTKMREKLQSLPRN.

This sequence belongs to the universal ribosomal protein uS14 family. Part of the 30S ribosomal subunit.

It is found in the plastid. The protein localises to the chloroplast. Functionally, binds 16S rRNA, required for the assembly of 30S particles. The protein is Small ribosomal subunit protein uS14c of Brachypodium distachyon (Purple false brome).